The chain runs to 257 residues: Probable enoyl-CoA hydratase echA17 (257 aa).

Belongs to the enoyl-CoA hydratase/isomerase family.

The enzyme catalyses a (3S)-3-hydroxyacyl-CoA = a (2E)-enoyl-CoA + H2O. It catalyses the reaction a 4-saturated-(3S)-3-hydroxyacyl-CoA = a (3E)-enoyl-CoA + H2O. In terms of biological role, could possibly oxidize fatty acids using specific components. The chain is Probable enoyl-CoA hydratase echA17 (echA17) from Mycolicibacterium paratuberculosis (strain ATCC BAA-968 / K-10) (Mycobacterium paratuberculosis).